The sequence spans 185 residues: Protein-arginine kinase activator protein (185 aa).

Phosphoarginine occurs at positions 115 and 169. The 36-residue stretch at 139 to 174 (RRQIDMLKKELESLIHQEEFENAAHVRDQIRLLEQS) folds into the UVR domain.

Interacts with McsB. Post-translationally, phosphorylated on Arg residues by McsB.

Its function is as follows. Activates the phosphorylation activity of the protein-arginine kinase McsB. Is required for the delocalization of competence proteins from the cell poles. In Bacillus subtilis (strain 168), this protein is Protein-arginine kinase activator protein (mcsA).